A 134-amino-acid chain; its full sequence is Profilin-4 (134 aa).

It belongs to the profilin family. In terms of assembly, occurs in many kinds of cells as a complex with monomeric actin in a 1:1 ratio. Specifically expressed in mature and germinating pollen grains, and growing pollen tubes (at protein level).

It is found in the cytoplasm. The protein resides in the cytoskeleton. Its function is as follows. Binds to actin monomers and regulates the organization of the actin cytoskeleton. At high concentrations, profilin prevents the polymerization of actin, whereas it enhances it at low concentrations. At low concentrations, associates with the poly-proline motif of formins to enhance actin filament elongation rate. Acts redundantly with PRF5 to regulate apical actin polymerization at the tip of pollen tube and control polarized pollen tube growth. Functions probably by favoring formin-mediated actin polymerization at pollen tube tips. In Arabidopsis thaliana (Mouse-ear cress), this protein is Profilin-4.